The primary structure comprises 458 residues: tRNA modification GTPase MnmE (458 aa).

(6S)-5-formyl-5,6,7,8-tetrahydrofolate contacts are provided by Arg26, Glu88, and Arg127. The region spanning 224–378 (GLSTAIIGRP…IEDRINQLFF (155 aa)) is the TrmE-type G domain. Position 234 (Asn234) interacts with K(+). Residues 234–239 (NVGKSS), 253–259 (TDIAGTT), and 278–281 (DTAG) each bind GTP. Residue Ser238 participates in Mg(2+) binding. Positions 253, 255, and 258 each coordinate K(+). A Mg(2+)-binding site is contributed by Thr259. Lys458 is a binding site for (6S)-5-formyl-5,6,7,8-tetrahydrofolate.

It belongs to the TRAFAC class TrmE-Era-EngA-EngB-Septin-like GTPase superfamily. TrmE GTPase family. As to quaternary structure, homodimer. Heterotetramer of two MnmE and two MnmG subunits. K(+) is required as a cofactor.

Its subcellular location is the cytoplasm. In terms of biological role, exhibits a very high intrinsic GTPase hydrolysis rate. Involved in the addition of a carboxymethylaminomethyl (cmnm) group at the wobble position (U34) of certain tRNAs, forming tRNA-cmnm(5)s(2)U34. This Streptococcus pyogenes serotype M4 (strain MGAS10750) protein is tRNA modification GTPase MnmE.